Here is a 435-residue protein sequence, read N- to C-terminus: Methylenetetrahydrofolate--tRNA-(uracil-5-)-methyltransferase TrmFO (435 aa).

9–14 (GAGLAG) is a binding site for FAD.

Belongs to the MnmG family. TrmFO subfamily. FAD is required as a cofactor.

Its subcellular location is the cytoplasm. It catalyses the reaction uridine(54) in tRNA + (6R)-5,10-methylene-5,6,7,8-tetrahydrofolate + NADH + H(+) = 5-methyluridine(54) in tRNA + (6S)-5,6,7,8-tetrahydrofolate + NAD(+). The catalysed reaction is uridine(54) in tRNA + (6R)-5,10-methylene-5,6,7,8-tetrahydrofolate + NADPH + H(+) = 5-methyluridine(54) in tRNA + (6S)-5,6,7,8-tetrahydrofolate + NADP(+). Its function is as follows. Catalyzes the folate-dependent formation of 5-methyl-uridine at position 54 (M-5-U54) in all tRNAs. This Staphylococcus haemolyticus (strain JCSC1435) protein is Methylenetetrahydrofolate--tRNA-(uracil-5-)-methyltransferase TrmFO.